The chain runs to 443 residues: ATP-dependent protease ATPase subunit HslU (443 aa).

Residues Val-18 and 60–65 (GVGKTE) contribute to the ATP site. The segment at 136-158 (LPPPRDFNEDSQRTNADSSTRQL) is disordered. Residues 148 to 157 (RTNADSSTRQ) are compositionally biased toward polar residues. ATP contacts are provided by Asp-256, Glu-321, and Arg-393.

Belongs to the ClpX chaperone family. HslU subfamily. A double ring-shaped homohexamer of HslV is capped on each side by a ring-shaped HslU homohexamer. The assembly of the HslU/HslV complex is dependent on binding of ATP.

It is found in the cytoplasm. Its function is as follows. ATPase subunit of a proteasome-like degradation complex; this subunit has chaperone activity. The binding of ATP and its subsequent hydrolysis by HslU are essential for unfolding of protein substrates subsequently hydrolyzed by HslV. HslU recognizes the N-terminal part of its protein substrates and unfolds these before they are guided to HslV for hydrolysis. The polypeptide is ATP-dependent protease ATPase subunit HslU (Marinobacter nauticus (strain ATCC 700491 / DSM 11845 / VT8) (Marinobacter aquaeolei)).